A 406-amino-acid polypeptide reads, in one-letter code: Probable endo-xylogalacturonan hydrolase A (406 aa).

Positions 1–18 (MISLNSIFLLSLVGLSRA) are cleaved as a signal peptide. The disordered stretch occupies residues 20–49 (PSRSETSPDRTIKPRAACTPTAGGSSSTDD). PbH1 repeat units lie at residues 183-213 (TSNAQFTSLTMDATSNSDNLPKNTDAFDIGA), 214-235 (STYVTISSVAITNDDDCVAFKP), 237-257 (ANYVTVENVSCTGSHGISVGS), 266-289 (VQNVYARNITMINSSKAAGIKTYP), 299-320 (VKNATFEDFIVDGCDYAFQIQS), and 368-390 (TCDVTISGFEVKAPSGDAKILCG). The Proton donor role is filled by Asp-228. Asn-244 carries an N-linked (GlcNAc...) asparagine glycan. The active site involves His-251. N-linked (GlcNAc...) asparagine glycosylation is found at Asn-273, Asn-278, and Asn-301.

The protein belongs to the glycosyl hydrolase 28 family.

The protein resides in the secreted. Its function is as follows. Pectinolytic enzyme involved in the degradation of xylogalacturonan (xga), a galacturonan backbone heavily substituted with xylose, and which is one important component of the hairy regions of pectin. Activity requires a galacturonic acid backbone substituted with xylose. This Aspergillus oryzae (strain ATCC 42149 / RIB 40) (Yellow koji mold) protein is Probable endo-xylogalacturonan hydrolase A (xghA).